Consider the following 73-residue polypeptide: Large ribosomal subunit protein bL31 (73 aa).

This sequence belongs to the bacterial ribosomal protein bL31 family. Type A subfamily. Part of the 50S ribosomal subunit.

In terms of biological role, binds the 23S rRNA. This chain is Large ribosomal subunit protein bL31, found in Cereibacter sphaeroides (strain ATCC 17025 / ATH 2.4.3) (Rhodobacter sphaeroides).